The sequence spans 467 residues: UDP-N-acetylmuramate--L-alanine ligase (467 aa).

ATP is bound at residue 114 to 120; it reads GTHGKTT.

The protein belongs to the MurCDEF family.

Its subcellular location is the cytoplasm. It carries out the reaction UDP-N-acetyl-alpha-D-muramate + L-alanine + ATP = UDP-N-acetyl-alpha-D-muramoyl-L-alanine + ADP + phosphate + H(+). It functions in the pathway cell wall biogenesis; peptidoglycan biosynthesis. Its function is as follows. Cell wall formation. The protein is UDP-N-acetylmuramate--L-alanine ligase of Rhodopseudomonas palustris (strain BisA53).